Consider the following 297-residue polypeptide: Probable endonuclease 4 (297 aa).

The Zn(2+) site is built by His-69, His-110, Glu-145, Asp-179, His-182, His-214, Asp-227, His-229, and Glu-259.

The protein belongs to the AP endonuclease 2 family. Zn(2+) serves as cofactor.

The enzyme catalyses Endonucleolytic cleavage to 5'-phosphooligonucleotide end-products.. Functionally, endonuclease IV plays a role in DNA repair. It cleaves phosphodiester bonds at apurinic or apyrimidinic (AP) sites, generating a 3'-hydroxyl group and a 5'-terminal sugar phosphate. This Bacillus velezensis (strain DSM 23117 / BGSC 10A6 / LMG 26770 / FZB42) (Bacillus amyloliquefaciens subsp. plantarum) protein is Probable endonuclease 4.